A 275-amino-acid chain; its full sequence is Shikimate dehydrogenase (NADP(+)) (275 aa).

Shikimate contacts are provided by residues 19–21 and threonine 66; that span reads SKS. Lysine 70 serves as the catalytic Proton acceptor. Glutamate 82 contacts NADP(+). Shikimate contacts are provided by asparagine 91 and aspartate 106. Residues 130 to 134, 154 to 159, and methionine 217 contribute to the NADP(+) site; these read GAGGA and NRTASK. Tyrosine 219 contacts shikimate. Glycine 241 is a binding site for NADP(+).

The protein belongs to the shikimate dehydrogenase family. In terms of assembly, homodimer.

It carries out the reaction shikimate + NADP(+) = 3-dehydroshikimate + NADPH + H(+). It functions in the pathway metabolic intermediate biosynthesis; chorismate biosynthesis; chorismate from D-erythrose 4-phosphate and phosphoenolpyruvate: step 4/7. Its function is as follows. Involved in the biosynthesis of the chorismate, which leads to the biosynthesis of aromatic amino acids. Catalyzes the reversible NADPH linked reduction of 3-dehydroshikimate (DHSA) to yield shikimate (SA). The sequence is that of Shikimate dehydrogenase (NADP(+)) from Colwellia psychrerythraea (strain 34H / ATCC BAA-681) (Vibrio psychroerythus).